Reading from the N-terminus, the 247-residue chain is 5-oxoprolinase subunit A (247 aa).

This sequence belongs to the LamB/PxpA family. As to quaternary structure, forms a complex composed of PxpA, PxpB and PxpC.

It catalyses the reaction 5-oxo-L-proline + ATP + 2 H2O = L-glutamate + ADP + phosphate + H(+). Catalyzes the cleavage of 5-oxoproline to form L-glutamate coupled to the hydrolysis of ATP to ADP and inorganic phosphate. In Histophilus somni (strain 129Pt) (Haemophilus somnus), this protein is 5-oxoprolinase subunit A.